Consider the following 65-residue polypeptide: GKEGYPADSKGCKVTCFFTGVGYCDKECKLKKASSGYCAWPACYCYGLPDSASVWDSATNKCGKK.

The 62-residue stretch at K2–G63 folds into the LCN-type CS-alpha/beta domain. 4 disulfides stabilise this stretch: C12–C62, C16–C38, C24–C43, and C28–C45. At C62 the chain carries Cysteine amide.

The protein belongs to the long (4 C-C) scorpion toxin superfamily. Sodium channel inhibitor family. Alpha subfamily. Expressed by the venom gland.

It is found in the secreted. Functionally, alpha toxins bind voltage-independently at site-3 of sodium channels (Nav) and inhibit the inactivation of the activated channels, thereby blocking neuronal transmission. This toxin is toxic to frogs but non-toxic to insect larvae (T.molitor), mammals (rats) and crustaceans (crabs) at the doses assayed. The chain is Beta-toxin Tf4a from Tityus fasciolatus (Central Brazilian scorpion).